The following is a 255-amino-acid chain: Developmental and secondary metabolism regulator MVE1 (255 aa).

The Velvet domain occupies 31–226 (GRKLTYRMSV…AEQGCRVRIR (196 aa)). The Nuclear localization signal signature appears at 45–50 (VRARAC). Disordered regions lie at residues 163 to 184 (CKSP…DAHV) and 229 to 255 (VRMR…QARA). The span at 245-255 (NYEDETAQARA) shows a compositional bias: acidic residues.

This sequence belongs to the velvet family. VeA subfamily. In terms of assembly, component of the heterotrimeric velvet complex composed of LAE1, MVE1 and VEL2; MVE1 acting as a bridging protein between LAE1 and VEL2.

The protein localises to the nucleus. Its subcellular location is the cytoplasm. Functionally, component of the velvet transcription factor complex that controls sexual/asexual developmental ratio in response to light, promoting sexual development in the darkness while stimulating asexual sporulation under illumination. The velvet complex hat acts as a global regulator for secondary metabolite gene expression. Controls the expression of the melanin gene cluster. Mediates the light-stimulated formation of aerial mycelia. The sequence is that of Developmental and secondary metabolism regulator MVE1 from Zymoseptoria tritici (strain CBS 115943 / IPO323) (Speckled leaf blotch fungus).